We begin with the raw amino-acid sequence, 479 residues long: Octopamine receptor (479 aa).

Over 1-57 (MGQAATHDANNYTSINYTEIYDVIEDEKDVCAVADEPNIPCSFGISLAVPEWEAICT) the chain is Extracellular. N-linked (GlcNAc...) asparagine glycosylation is found at asparagine 11 and asparagine 16. The helical transmembrane segment at 58-80 (AIILTMIIISTVVGNILVILSVF) threads the bilayer. At 81–90 (TYKPLRIVQN) the chain is on the cytoplasmic side. The chain crosses the membrane as a helical span at residues 91–112 (FFIVSLAVADLTVAILVLPLNV). Over 113-129 (AYSILGQWVFGIYVCKM) the chain is Extracellular. A helical membrane pass occupies residues 130 to 150 (WLTCDIMCCTSSILNLCAIAL). Residues 151 to 170 (DRYWAITDPINYAQKRTLER) are Cytoplasmic-facing. Residues 171–193 (VLFMIGIVWILSLVISSPPLLGW) form a helical membrane-spanning segment. At 194-218 (NDWPEVFEPDTPCRLTSQPGFVIFS) the chain is on the extracellular side. The chain crosses the membrane as a helical span at residues 219-240 (SSGSFYIPLVIMTVVYFEIYLA). The Cytoplasmic portion of the chain corresponds to 241–407 (TKKRLRDRAK…LTRERRAART (167 aa)). The interval 260–319 (GRNKYETKESDPNDQDSVSSDANPNEHQGGTRLVAENEKKHRTRKLTPKKKPKRRYWSKD) is disordered. Residues 274–287 (QDSVSSDANPNEHQ) show a composition bias toward polar residues. Basic residues predominate over residues 299–315 (KHRTRKLTPKKKPKRRY). Residues 408–429 (LGIIMGVFVVCWLPFFVIYLVI) form a helical membrane-spanning segment. Over 430–441 (PFCVSCCLSNKF) the chain is Extracellular. A helical membrane pass occupies residues 442–462 (INFITWLGYVNSALNPLIYTI). Residues 463 to 479 (FNMDFRRAFKKLLFIKC) lie on the Cytoplasmic side of the membrane.

This sequence belongs to the G-protein coupled receptor 1 family.

The protein localises to the cell membrane. Functionally, receptor for octopamine. Octopamine (OA) is a neurotransmitter, neurohormone, and neuromodulator in invertebrates. The activity of this receptor is mediated by G proteins which activate adenylyl cyclase. This chain is Octopamine receptor, found in Bombyx mori (Silk moth).